Reading from the N-terminus, the 100-residue chain is Small ribosomal subunit protein uS14c (100 aa).

It belongs to the universal ribosomal protein uS14 family. In terms of assembly, part of the 30S ribosomal subunit.

The protein resides in the plastid. Functionally, binds 16S rRNA, required for the assembly of 30S particles. The polypeptide is Small ribosomal subunit protein uS14c (Aneura mirabilis (Parasitic liverwort)).